The sequence spans 297 residues: Probable terminal-alkyne amino-acid exporter (297 aa).

9 consecutive transmembrane segments (helical) span residues 6 to 26 (AVWA…AIRV), 32 to 52 (GVAG…AIAA), 65 to 85 (LPMI…LLNW), 95 to 115 (ASLL…VFLG), 123 to 143 (IAGS…GGHA), 150 to 170 (WVVL…KPLL), 178 to 198 (VACY…PAMV), 212 to 232 (TVYL…YAVA), and 249 to 269 (VALV…ALVG). EamA domains lie at 6-137 (AVWA…AVIA) and 150-281 (WVVL…MLIN).

It belongs to the EamA transporter family.

Its subcellular location is the cell membrane. Functionally, probably involved in the export of terminal alkyne-containing amino acids, namely L-propargylglycine (Pra) and L-beta-ethynylserine, that are antibiotics synthesized by enzymes encoded in the same gene cluster. The sequence is that of Probable terminal-alkyne amino-acid exporter from Streptantibioticus cattleyicolor (strain ATCC 35852 / DSM 46488 / JCM 4925 / NBRC 14057 / NRRL 8057) (Streptomyces cattleya).